A 58-amino-acid chain; its full sequence is Large ribosomal subunit protein bL32 (58 aa).

The protein belongs to the bacterial ribosomal protein bL32 family.

The chain is Large ribosomal subunit protein bL32 from Carboxydothermus hydrogenoformans (strain ATCC BAA-161 / DSM 6008 / Z-2901).